The primary structure comprises 353 residues: tRNA N6-adenosine threonylcarbamoyltransferase (353 aa).

Residues H109 and H113 each coordinate Fe cation. Residues 136-140, D169, G182, D186, and N284 contribute to the substrate site; that span reads TVSGG. D312 contacts Fe cation.

It belongs to the KAE1 / TsaD family. It depends on Fe(2+) as a cofactor.

The protein localises to the cytoplasm. It catalyses the reaction L-threonylcarbamoyladenylate + adenosine(37) in tRNA = N(6)-L-threonylcarbamoyladenosine(37) in tRNA + AMP + H(+). Functionally, required for the formation of a threonylcarbamoyl group on adenosine at position 37 (t(6)A37) in tRNAs that read codons beginning with adenine. Is involved in the transfer of the threonylcarbamoyl moiety of threonylcarbamoyl-AMP (TC-AMP) to the N6 group of A37, together with TsaE and TsaB. TsaD likely plays a direct catalytic role in this reaction. This is tRNA N6-adenosine threonylcarbamoyltransferase from Chlorobium phaeobacteroides (strain DSM 266 / SMG 266 / 2430).